A 197-amino-acid polypeptide reads, in one-letter code: Holliday junction branch migration complex subunit RuvA (197 aa).

The domain I stretch occupies residues 1 to 63; sequence MFEYLNGKLV…EDAHSLYGFV (63 aa). The interval 64 to 142 is domain II; that stretch reads NESEKALFLR…ATGAVGISLL (79 aa). The tract at residues 142–146 is flexible linker; the sequence is LDAAP. A domain III region spans residues 147–197; that stretch reads AGNLALEEAIEALQALGYKATELKKIEKKLEQEAGLTSEEYIKSALKLMMK.

Belongs to the RuvA family. In terms of assembly, homotetramer. Forms an RuvA(8)-RuvB(12)-Holliday junction (HJ) complex. HJ DNA is sandwiched between 2 RuvA tetramers; dsDNA enters through RuvA and exits via RuvB. An RuvB hexamer assembles on each DNA strand where it exits the tetramer. Each RuvB hexamer is contacted by two RuvA subunits (via domain III) on 2 adjacent RuvB subunits; this complex drives branch migration. In the full resolvosome a probable DNA-RuvA(4)-RuvB(12)-RuvC(2) complex forms which resolves the HJ.

It localises to the cytoplasm. The RuvA-RuvB-RuvC complex processes Holliday junction (HJ) DNA during genetic recombination and DNA repair, while the RuvA-RuvB complex plays an important role in the rescue of blocked DNA replication forks via replication fork reversal (RFR). RuvA specifically binds to HJ cruciform DNA, conferring on it an open structure. The RuvB hexamer acts as an ATP-dependent pump, pulling dsDNA into and through the RuvAB complex. HJ branch migration allows RuvC to scan DNA until it finds its consensus sequence, where it cleaves and resolves the cruciform DNA. This Lactococcus lactis subsp. cremoris (strain SK11) protein is Holliday junction branch migration complex subunit RuvA.